Reading from the N-terminus, the 167-residue chain is SsrA-binding protein (167 aa).

Residues Gln-139–Arg-158 are compositionally biased toward basic and acidic residues. Residues Gln-139–Ala-167 are disordered.

Belongs to the SmpB family.

It localises to the cytoplasm. Its function is as follows. Required for rescue of stalled ribosomes mediated by trans-translation. Binds to transfer-messenger RNA (tmRNA), required for stable association of tmRNA with ribosomes. tmRNA and SmpB together mimic tRNA shape, replacing the anticodon stem-loop with SmpB. tmRNA is encoded by the ssrA gene; the 2 termini fold to resemble tRNA(Ala) and it encodes a 'tag peptide', a short internal open reading frame. During trans-translation Ala-aminoacylated tmRNA acts like a tRNA, entering the A-site of stalled ribosomes, displacing the stalled mRNA. The ribosome then switches to translate the ORF on the tmRNA; the nascent peptide is terminated with the 'tag peptide' encoded by the tmRNA and targeted for degradation. The ribosome is freed to recommence translation, which seems to be the essential function of trans-translation. This chain is SsrA-binding protein, found in Xanthomonas oryzae pv. oryzae (strain PXO99A).